We begin with the raw amino-acid sequence, 711 residues long: Ribosomal RNA large subunit methyltransferase K/L (711 aa).

In terms of domain architecture, THUMP spans 43 to 154; it reads TLYRTLLWSR…RENLVISLDL (112 aa).

It belongs to the methyltransferase superfamily. RlmKL family.

The protein resides in the cytoplasm. It catalyses the reaction guanosine(2445) in 23S rRNA + S-adenosyl-L-methionine = N(2)-methylguanosine(2445) in 23S rRNA + S-adenosyl-L-homocysteine + H(+). The enzyme catalyses guanosine(2069) in 23S rRNA + S-adenosyl-L-methionine = N(2)-methylguanosine(2069) in 23S rRNA + S-adenosyl-L-homocysteine + H(+). In terms of biological role, specifically methylates the guanine in position 2445 (m2G2445) and the guanine in position 2069 (m7G2069) of 23S rRNA. The sequence is that of Ribosomal RNA large subunit methyltransferase K/L from Haemophilus influenzae (strain PittGG).